We begin with the raw amino-acid sequence, 274 residues long: Large ribosomal subunit protein uL2 (274 aa).

Positions 223–274 (VAMNPVDHPHGGGEGRTSGGRHPVTPWGVPTKGYKTRSNKRTDKYIVRRRNK) are disordered.

The protein belongs to the universal ribosomal protein uL2 family. As to quaternary structure, part of the 50S ribosomal subunit. Forms a bridge to the 30S subunit in the 70S ribosome.

Functionally, one of the primary rRNA binding proteins. Required for association of the 30S and 50S subunits to form the 70S ribosome, for tRNA binding and peptide bond formation. It has been suggested to have peptidyltransferase activity; this is somewhat controversial. Makes several contacts with the 16S rRNA in the 70S ribosome. The polypeptide is Large ribosomal subunit protein uL2 (Shewanella oneidensis (strain ATCC 700550 / JCM 31522 / CIP 106686 / LMG 19005 / NCIMB 14063 / MR-1)).